A 271-amino-acid chain; its full sequence is MLATSDLWFRYQDEPVLKGLNLDFSLSPVTGLVGANGCGKSTLFMNLSGLLRPQKGAVLWQGKPLDYSKRGLLALRQQVATVFQDPEQQIFYTDIDSDIAFSLRNLGVPEAEITRRVDEALTLVDAQHFRHQPIQCLSHGQKKRVAIAGALVLQARYLLLDEPTAGLDPAGRTQMIAIIRRIVAQGNHVIISSHDIDLIYEISDAVYVLRQGQILMHGAPGEVFACTEAMEHAGLTQPWLVKLHTQLGLPLCKTETEFFHRMQKCAFKEAS.

Residues 2–236 form the ABC transporter domain; it reads LATSDLWFRY…TEAMEHAGLT (235 aa). 34–41 is an ATP binding site; the sequence is GANGCGKS.

This sequence belongs to the ABC transporter superfamily. Cobalt importer (TC 3.A.1.18.1) family. As to quaternary structure, forms an energy-coupling factor (ECF) transporter complex composed of an ATP-binding protein (A component, CbiO), a transmembrane protein (T component, CbiQ) and 2 possible substrate-capture proteins (S components, CbiM and CbiN) of unknown stoichimetry.

Its subcellular location is the cell inner membrane. It functions in the pathway cofactor biosynthesis; adenosylcobalamin biosynthesis. Part of the energy-coupling factor (ECF) transporter complex CbiMNOQ involved in cobalt import. Presumably responsible for energy coupling to the transport system. In Salmonella paratyphi A (strain ATCC 9150 / SARB42), this protein is Cobalt import ATP-binding protein CbiO.